We begin with the raw amino-acid sequence, 279 residues long: Energy-coupling factor transporter ATP-binding protein EcfA1 (279 aa).

The 236-residue stretch at 5 to 240 (IELKKVTFNY…GDELLQLGLD (236 aa)) folds into the ABC transporter domain. 40–47 (GHNGSGKS) serves as a coordination point for ATP.

The protein belongs to the ABC transporter superfamily. Energy-coupling factor EcfA family. As to quaternary structure, forms a stable energy-coupling factor (ECF) transporter complex composed of 2 membrane-embedded substrate-binding proteins (S component), 2 ATP-binding proteins (A component) and 2 transmembrane proteins (T component).

Its subcellular location is the cell membrane. Functionally, ATP-binding (A) component of a common energy-coupling factor (ECF) ABC-transporter complex. Unlike classic ABC transporters this ECF transporter provides the energy necessary to transport a number of different substrates. The polypeptide is Energy-coupling factor transporter ATP-binding protein EcfA1 (Streptococcus pyogenes serotype M5 (strain Manfredo)).